The chain runs to 170 residues: Calcineurin subunit B type 2 (170 aa).

A lipid anchor (N-myristoyl glycine) is attached at Gly-2. EF-hand domains lie at 18–46 (DEIKRLGRRFKKLDLDKSGSLSVEEFMSL), 50–85 (RHNPLVRRVIDVFDTDGDGEVDFKEFILGTSQFSVK), 87–122 (DEEQKLRFAFSIYDMDKDGYISNGELFQVLKMMVGN), and 128–163 (QLQQLVDKTIIILDKDGDGKISFEEFSAVVRDLEIH). Ca(2+) is bound by residues Asp-31, Asp-33, Ser-35, Ser-37, Glu-42, Asp-63, Asp-65, Asp-67, Glu-69, Glu-74, Asp-100, Asp-102, Asp-104, Tyr-106, and Glu-111. The tract at residues 131–136 (QLVDKT) is calcineurin A binding. Ca(2+) contacts are provided by Asp-141, Asp-143, Asp-145, Lys-147, and Glu-152.

Belongs to the calcineurin regulatory subunit family. In terms of assembly, forms a complex composed of a calmodulin-dependent catalytic subunit (also known as calcineurin A) and a regulatory Ca(2+)-binding subunit (also known as calcineurin B). There are three catalytic subunits, each encoded by a separate gene (PPP3CA, PPP3CB, and PPP3CC) and two regulatory subunits which are also encoded by separate genes (PPP3R1 and PPP3R2). Interacts with SPATA33 (via PQIIIT motif). As to expression, testis-specific.

It is found in the mitochondrion. Its function is as follows. Regulatory subunit of calcineurin, a calcium-dependent, calmodulin stimulated protein phosphatase. Confers calcium sensitivity. The polypeptide is Calcineurin subunit B type 2 (PPP3R2) (Homo sapiens (Human)).